The following is a 289-amino-acid chain: Mas-related G-protein coupled receptor member G (289 aa).

Over 1-13 (MLSIFNIWGTFNR) the chain is Extracellular. The chain crosses the membrane as a helical span at residues 14–34 (VLFFLSLTVSLAGLAGNTLLL). Topologically, residues 35–49 (WHLGLRIKKGPFNTY) are cytoplasmic. A helical membrane pass occupies residues 50–70 (LLHLAAADFLFLSCQVGFSIA). Topologically, residues 71–80 (KIASGYEDTL) are extracellular. Residues 81–101 (YFPVTFLWFAVGLWLLAAFIV) form a helical membrane-spanning segment. The Cytoplasmic segment spans residues 102-123 (DCCLSYMFPSFCGPNCRPRYTS). The helical transmembrane segment at 124-144 (FVLCLVIWALTMLAVLLPANA) threads the bilayer. Over 145 to 164 (CGLLYNRMSLLVCLKYHWVS) the chain is Extracellular. A helical membrane pass occupies residues 165 to 185 (VVWLGVLASTACGASMFLLVF). Topologically, residues 186-200 (GNCCSSQPPSKFCKL) are cytoplasmic. Residues 201-221 (AQCSGILLFFCRLPLVFYWCL) traverse the membrane as a helical segment. Residue Arg222 is a topological domain, extracellular. A helical membrane pass occupies residues 223–243 (PVIKFLLPFFFPLATLLACID). The Cytoplasmic segment spans residues 244 to 289 (SSAKPLLYYLKGRQLRKEPLQVALNRALGEESQSSSGGISLPMSRV).

The protein belongs to the G-protein coupled receptor 1 family. Mas subfamily.

It localises to the cell membrane. Its function is as follows. Orphan receptor. May regulate nociceptor function and/or development, including the sensation or modulation of pain. The polypeptide is Mas-related G-protein coupled receptor member G (Mrgprg) (Rattus norvegicus (Rat)).